The sequence spans 66 residues: uncharacterized protein (66 aa).

Positions 1-21 (MPGGDRTGPWGQGPRTGRRAG) are disordered.

This is an uncharacterized protein from Archaeoglobus fulgidus (strain ATCC 49558 / DSM 4304 / JCM 9628 / NBRC 100126 / VC-16).